A 158-amino-acid polypeptide reads, in one-letter code: Ecotin-like protein 2 (158 aa).

It belongs to the protease inhibitor I11 (ecotin) family.

In Leishmania major, this protein is Ecotin-like protein 2.